Consider the following 295-residue polypeptide: Small ribosomal subunit protein uS2 (295 aa).

A disordered region spans residues 260 to 295 (KQAKKFSKTKNIDEETNTEFEQALNDADENKNSDNA).

Belongs to the universal ribosomal protein uS2 family.

This is Small ribosomal subunit protein uS2 from Rickettsia felis (strain ATCC VR-1525 / URRWXCal2) (Rickettsia azadi).